The sequence spans 103 residues: Large ribosomal subunit protein bL21 (103 aa).

The protein belongs to the bacterial ribosomal protein bL21 family. As to quaternary structure, part of the 50S ribosomal subunit. Contacts protein L20.

Functionally, this protein binds to 23S rRNA in the presence of protein L20. The polypeptide is Large ribosomal subunit protein bL21 (Polaromonas naphthalenivorans (strain CJ2)).